We begin with the raw amino-acid sequence, 919 residues long: WD repeat-containing protein 47 (919 aa).

One can recognise a LisH domain in the interval 10–42 (KEVEIIKLILDFLNSKKLHISMLALEKESGVIN). A CTLH domain is found at 45 to 102 (FSDDMLFLRQLILDGQWDEVLQFIQPLECMEKFDKKRFRYIILKQKFLEALCVNNAMS). T285 carries the phosphothreonine modification. Phosphoserine is present on residues S289, S292, S297, and S312. A disordered region spans residues 393 to 421 (GQSSVSEKEPANGAQNPGPAKQEKNELRD). A Phosphoserine modification is found at S422. Positions 500-590 (LNQQCNGSKG…SLSRSKGEED (91 aa)) are disordered. Residues 517–551 (VTSFTTPPQDSSQRLTHDASNIHTSTPRNPGSTNH) show a composition bias toward polar residues. A Phosphothreonine modification is found at T542. WD repeat units follow at residues 604-643 (EDTQ…DPSA), 659-698 (HHKG…CNAT), 706-748 (MHDG…GQGL), 753-791 (GHTG…CVRV), 798-837 (GTGS…MVQS), 840-879 (PHSS…TKQL), and 886-918 (EHKD…WTYN).

Interacts with MAP1S (via WD repeats).

The protein localises to the cytoplasm. It localises to the cytoskeleton. The sequence is that of WD repeat-containing protein 47 (WDR47) from Homo sapiens (Human).